The primary structure comprises 126 residues: Probable glycine cleavage system H protein (126 aa).

Positions 24–106 constitute a Lipoyl-binding domain; it reads VVRVGITDFA…FGDGWLLEVE (83 aa). N6-lipoyllysine is present on Lys65.

Belongs to the GcvH family. The glycine cleavage system is composed of four proteins: P, T, L and H. The cofactor is (R)-lipoate.

Its function is as follows. The glycine cleavage system catalyzes the degradation of glycine. The H protein shuttles the methylamine group of glycine from the P protein to the T protein. The protein is Probable glycine cleavage system H protein of Natronomonas pharaonis (strain ATCC 35678 / DSM 2160 / CIP 103997 / JCM 8858 / NBRC 14720 / NCIMB 2260 / Gabara) (Halobacterium pharaonis).